The chain runs to 221 residues: CDC5 pindle pole body anchor protein 1 (221 aa).

The disordered stretch occupies residues 142 to 221; it reads KNIERDNLKP…PTEDSVPHAE (80 aa). 3 positions are modified to phosphoserine: Ser-158, Ser-170, and Ser-175. A CDC5-binding motif is present at residues 165 to 170; sequence PLVTSS. A compositionally biased stretch (polar residues) spans 166–188; that stretch reads LVTSSPIHMSPLQSRQRPVSSLQ. Positions 189–195 match the CLB3-docking motif; sequence PPKGPNF. Positions 200-202 match the CDC14-binding motif; that stretch reads PKL.

In terms of assembly, interacts with CDC5 and CDC14. Phosphorylated by CLB3-CDK1 in metaphase which is required for correct localization at the nuclear envelop and the spindle pole body, and dephosphorylated by CDC14 in early anaphase.

The protein resides in the nucleus membrane. The protein localises to the cytoplasm. Its subcellular location is the cytoskeleton. It is found in the microtubule organizing center. It localises to the spindle pole body. Its function is as follows. Specialized component of the nuclear membrane that may be involved in the connection of the spindle pole body (SPB) to the nuclear envelope. Recruits CDC5 to spindle pole bodies in metaphase. This is CDC5 pindle pole body anchor protein 1 from Saccharomyces cerevisiae (strain ATCC 204508 / S288c) (Baker's yeast).